The following is a 281-amino-acid chain: Bifunctional protein FolD (281 aa).

NADP(+) is bound by residues Gly165–Gly167, Thr192, and Val233.

It belongs to the tetrahydrofolate dehydrogenase/cyclohydrolase family. As to quaternary structure, homodimer.

The catalysed reaction is (6R)-5,10-methylene-5,6,7,8-tetrahydrofolate + NADP(+) = (6R)-5,10-methenyltetrahydrofolate + NADPH. It carries out the reaction (6R)-5,10-methenyltetrahydrofolate + H2O = (6R)-10-formyltetrahydrofolate + H(+). The protein operates within one-carbon metabolism; tetrahydrofolate interconversion. Its function is as follows. Catalyzes the oxidation of 5,10-methylenetetrahydrofolate to 5,10-methenyltetrahydrofolate and then the hydrolysis of 5,10-methenyltetrahydrofolate to 10-formyltetrahydrofolate. This chain is Bifunctional protein FolD, found in Mycobacterium avium (strain 104).